The chain runs to 89 residues: Small ribosomal subunit protein uS15 (89 aa).

It belongs to the universal ribosomal protein uS15 family. As to quaternary structure, part of the 30S ribosomal subunit. Forms a bridge to the 50S subunit in the 70S ribosome, contacting the 23S rRNA.

Functionally, one of the primary rRNA binding proteins, it binds directly to 16S rRNA where it helps nucleate assembly of the platform of the 30S subunit by binding and bridging several RNA helices of the 16S rRNA. Forms an intersubunit bridge (bridge B4) with the 23S rRNA of the 50S subunit in the ribosome. The polypeptide is Small ribosomal subunit protein uS15 (Crocosphaera subtropica (strain ATCC 51142 / BH68) (Cyanothece sp. (strain ATCC 51142))).